We begin with the raw amino-acid sequence, 421 residues long: Bone morphogenetic protein 10 (421 aa).

The N-terminal stretch at 1–21 (MGSLVLPLSAVFCLVAHSASG) is a signal peptide. Positions 22–313 (SPIMGLEQSP…IDDSSARIRR (292 aa)) are excised as a propeptide. Asn67 and Asn131 each carry an N-linked (GlcNAc...) asparagine glycan. Disulfide bonds link Cys320–Cys386, Cys349–Cys418, and Cys353–Cys420.

Belongs to the TGF-beta family. Homodimer; disulfide-linked. Interacts with FBN1 (via N-terminal domain) and FBN2. Interacts with ENG. As to expression, in the embryo, expressed exclusively in the ventricular trabecular myocardium of the developing heart from 9.0 dpc-13.5 dpc. By 16.5 dpc-18.5 dpc, only detectable in atria. Highly expressed in the adult heart where it is found in the right atrium but not in the left atrium. Lower levels in adult liver and lung.

It is found in the secreted. Its function is as follows. Required for maintaining the proliferative activity of embryonic cardiomyocytes by preventing premature activation of the negative cell cycle regulator CDKN1C/p57KIP and maintaining the required expression levels of cardiogenic factors such as MEF2C and NKX2-5. Acts as a ligand for ACVRL1/ALK1, BMPR1A/ALK3 and BMPR1B/ALK6, leading to activation of SMAD1, SMAD5 and SMAD8 transcription factors. Inhibits endothelial cell migration and growth. May reduce cell migration and cell matrix adhesion in breast cancer cell lines. In Mus musculus (Mouse), this protein is Bone morphogenetic protein 10 (Bmp10).